The sequence spans 176 residues: HTH-type transcriptional regulator DctR (176 aa).

Residues 109 to 174 (VPEANVSLSR…ELVRHQHIDY (66 aa)) enclose the HTH luxR-type domain. A DNA-binding region (H-T-H motif) is located at residues 133 to 152 (TEDILEKLKISLKTFYCHKH).

In terms of biological role, may act as a transcriptional regulator of dctA. The chain is HTH-type transcriptional regulator DctR (dctR) from Shigella flexneri.